We begin with the raw amino-acid sequence, 234 residues long: Adenosine 5'-phosphosulfate reductase (234 aa).

4 residues coordinate [4Fe-4S] cluster: Cys-120, Cys-121, Cys-203, and Cys-206. The active-site Nucleophile; cysteine thiosulfonate intermediate is the Cys-229.

Belongs to the PAPS reductase family. CysH subfamily. [4Fe-4S] cluster serves as cofactor.

The protein localises to the cytoplasm. The catalysed reaction is [thioredoxin]-disulfide + sulfite + AMP + 2 H(+) = adenosine 5'-phosphosulfate + [thioredoxin]-dithiol. The protein operates within sulfur metabolism; hydrogen sulfide biosynthesis; sulfite from sulfate. Catalyzes the formation of sulfite from adenosine 5'-phosphosulfate (APS) using thioredoxin as an electron donor. The chain is Adenosine 5'-phosphosulfate reductase from Bacillus thuringiensis (strain Al Hakam).